The following is a 115-amino-acid chain: Thiosulfate:glutathione sulfurtransferase (115 aa).

Positions 17-115 constitute a Rhodanese domain; the sequence is ASGRARLFDV…AYREWLEKES (99 aa). Catalysis depends on Cys-79, which acts as the Cysteine persulfide intermediate.

As to expression, highly expressed in kidney, liver and skeletal muscle. Lower levels of expression in heart, colon, thymus, spleen, placenta and lung. Weakly expressed in brain, small intestine and peripheral blood leukocytes. Expressed at high levels in the breast carcinoma cell lines MCF-7 and MDA-MB-468 and at a lower level in the breast carcinoma cell line MDA-MB-231, the colon carcinoma call line LoVo and the lung carcinoma cell line A-549. No expression in the cell lines EFO-27 and HeLa, or the normal breast tissue cell lines MCF-10A and H184A1. Detected in invasive ductal carcinoma, but not in the adjacent tissues.

Its subcellular location is the cytoplasm. The protein localises to the perinuclear region. It carries out the reaction thiosulfate + glutathione = S-sulfanylglutathione + sulfite + H(+). It catalyses the reaction thiosulfate + 2 glutathione = glutathione disulfide + hydrogen sulfide + sulfite + 2 H(+). With respect to regulation, GSS(-) is a potent inhibitor of TSTD1, since the presence of the sulfur dioxygenase (SDO) strongly increases the TSTD1 catalytic activity. Its function is as follows. Thiosulfate:glutathione sulfurtransferase (TST) required to produce S-sulfanylglutathione (GSS(-)), a central intermediate in hydrogen sulfide metabolism. Provides the link between the first step in mammalian H(2)S metabolism performed by the sulfide:quinone oxidoreductase (SQOR) which catalyzes the conversion of H(2)S to thiosulfate, and the sulfur dioxygenase (SDO) which uses GSS(-) as substrate. The thermodynamic coupling of the irreversible SDO and reversible TST reactions provides a model for the physiologically relevant reaction with thiosulfate as the sulfane donor. GSS(-) spontaneously reacts with glutathione to form glutathione disulfide. The chain is Thiosulfate:glutathione sulfurtransferase (TSTD1) from Homo sapiens (Human).